Reading from the N-terminus, the 689-residue chain is Elongation factor G (689 aa).

Residues 9–283 (AKFRNIGIMA…AIIEFMPSPL (275 aa)) form the tr-type G domain. GTP is bound by residues 18 to 25 (AHIDAGKT), 82 to 86 (DTPGH), and 136 to 139 (NKMD).

Belongs to the TRAFAC class translation factor GTPase superfamily. Classic translation factor GTPase family. EF-G/EF-2 subfamily.

The protein resides in the cytoplasm. In terms of biological role, catalyzes the GTP-dependent ribosomal translocation step during translation elongation. During this step, the ribosome changes from the pre-translocational (PRE) to the post-translocational (POST) state as the newly formed A-site-bound peptidyl-tRNA and P-site-bound deacylated tRNA move to the P and E sites, respectively. Catalyzes the coordinated movement of the two tRNA molecules, the mRNA and conformational changes in the ribosome. This is Elongation factor G from Clostridium botulinum (strain Okra / Type B1).